Reading from the N-terminus, the 803-residue chain is H(+)/Cl(-) exchange transporter 7 (803 aa).

Residues 1–46 (MANVSKKVSWSGRDRDDEEGAPLLRRTGQPDEETPLLNGAGPGARQ) are disordered. The Cytoplasmic portion of the chain corresponds to 1–124 (MANVSKKVSW…TAFRTVEIKR (124 aa)). Residue S9 is modified to Phosphoserine. 2 consecutive transmembrane segments (helical) span residues 125–157 (WVIC…YRVI) and 172–195 (FSLL…VAFI). The short motif at 201–205 (GSGIP) is the Selectivity filter part_1 element. S202 is a binding site for chloride. The segment at residues 204 to 211 (IPQIKCFL) is an intramembrane region (helical). Transmembrane regions (helical) follow at residues 221–239 (RLKT…VVGG) and 245–262 (EGPM…ISQG). Residues 243 to 247 (GKEGP) carry the Selectivity filter part_2 motif. 2 consecutive intramembrane regions (helical) follow at residues 286 to 298 (FVSA…VSAA) and 302 to 310 (PVGGVLFSL). The next 5 membrane-spanning stretches (helical) occupy residues 320-339 (FLTW…LNFV), 373-403 (IPVF…FRIR), 408-430 (PCLQ…FVLI), 485-505 (PMTL…TYGL), and 510-533 (GVFI…LSYL). The Selectivity filter part_3 signature appears at 510–514 (GVFIP). F512 contributes to the chloride binding site. The helical intramembrane region spans 543 to 557 (GKYALMGAAAQLGGI). An intramembrane region (note=Loop between two helices) is located at residues 558–560 (VRM). The helical intramembrane region spans 561 to 572 (TLSLTVIMMEAT). Residues 573–576 (SNVT) constitute an intramembrane region (note=Loop between two helices). A helical membrane pass occupies residues 577–595 (YGFPIMLVLMTAKIVGDVF). Residues 596-803 (IEGLYDMHIQ…GLEELSLAQT (208 aa)) lie on the Cytoplasmic side of the membrane. Chloride is bound at residue Y600. CBS domains are found at residues 629-693 (MSTP…VFVE) and 739-797 (MNPS…GLEE). Residues 656–658 (HNG) and 781–784 (TRKD) contribute to the ATP site. S799 is subject to Phosphoserine.

This sequence belongs to the chloride channel (TC 2.A.49) family. ClC-7/CLCN7 subfamily. Chloride channel 7 are heteromers of alpha (CLCN7) and beta (OSTM1) subunits. Liver, spleen, kidneys and brain.

It is found in the lysosome membrane. The catalysed reaction is 2 chloride(in) + H(+)(out) = 2 chloride(out) + H(+)(in). Slowly voltage-gated channel mediating the exchange of chloride ions against protons. Functions as antiporter and contributes to the acidification of the lysosome lumen and may be involved in maintaining lysosomal pH. The CLC channel family contains both chloride channels and proton-coupled anion transporters that exchange chloride or another anion for protons. The presence of conserved gating glutamate residues is typical for family members that function as antiporters. The polypeptide is H(+)/Cl(-) exchange transporter 7 (Mus musculus (Mouse)).